The chain runs to 215 residues: MRVILLGAPGAGKGTQAKFITEKFGIPQISTGDMLRAAVKAGTELGLKAKSVMDAGNLVSDDLIIGLIKDRLAEPDCANGVLFDGFPRTIPQAEALLKAGLEIDHVLEIAVDDEEIVKRMSGRRVHEGSGRIYHTIFNPPKVEGVDDVTGESLVQRKDDVEETVRLRLKVYHDQTKPLVEFYSKLEAQNGKPKCSHIPGVGSVEEITAKVLVALS.

10 to 15 contacts ATP; it reads GAGKGT. The NMP stretch occupies residues 30 to 59; that stretch reads STGDMLRAAVKAGTELGLKAKSVMDAGNLV. Residues Thr-31, Arg-36, 57-59, 85-88, and Gln-92 contribute to the AMP site; these read NLV and GFPR. Residues 122–159 form an LID region; the sequence is GRRVHEGSGRIYHTIFNPPKVEGVDDVTGESLVQRKDD. Residues Arg-123 and 132–133 each bind ATP; that span reads IY. AMP-binding residues include Arg-156 and Arg-167. ATP is bound at residue Gly-201.

It belongs to the adenylate kinase family. Monomer.

The protein localises to the cytoplasm. The enzyme catalyses AMP + ATP = 2 ADP. It functions in the pathway purine metabolism; AMP biosynthesis via salvage pathway; AMP from ADP: step 1/1. In terms of biological role, catalyzes the reversible transfer of the terminal phosphate group between ATP and AMP. Plays an important role in cellular energy homeostasis and in adenine nucleotide metabolism. The polypeptide is Adenylate kinase (Pseudomonas syringae pv. tomato (strain ATCC BAA-871 / DC3000)).